The sequence spans 101 residues: Large ribosomal subunit protein uL24 (101 aa).

It belongs to the universal ribosomal protein uL24 family. In terms of assembly, part of the 50S ribosomal subunit.

In terms of biological role, one of two assembly initiator proteins, it binds directly to the 5'-end of the 23S rRNA, where it nucleates assembly of the 50S subunit. One of the proteins that surrounds the polypeptide exit tunnel on the outside of the subunit. This Borrelia turicatae (strain 91E135) protein is Large ribosomal subunit protein uL24.